Reading from the N-terminus, the 560-residue chain is Choline/ethanolamine transporter FLVCR1 (560 aa).

Residues 1–22 (MVKLNDEEGAAMAPGHQPTNGY) form a disordered region. Topologically, residues 1 to 99 (MVKLNDEEGA…TPGTEGSPAP (99 aa)) are cytoplasmic. Ser-56 is modified (phosphoserine). The tract at residues 68–99 (QTPLAPEEETQTRLLPTGPGEETPGTEGSPAP) is disordered. Residues 83–95 (PTGPGEETPGTEG) show a composition bias toward low complexity. A helical membrane pass occupies residues 100 to 124 (QTALSARRFVVLLIFSLYSLVNAFQ). At 125–142 (WIQYSVISNVFEGFYGVS) the chain is on the extracellular side. A helical membrane pass occupies residues 143 to 170 (SLHIDWLSMVYMLAYVPLIFPATWLLDT). Over 171–172 (RG) the chain is Cytoplasmic. Residues 173–192 (LRLTALLGSGLNCLGAWVKC) form a helical membrane-spanning segment. Residues 193–199 (ASVQQHL) lie on the Extracellular side of the membrane. A helical membrane pass occupies residues 200–228 (FWVTMLGQCLCSVAQVFILGLPSRIASVW). Gln-214 lines the ethanolamine pocket. Residues 229–233 (FGPKE) are Cytoplasmic-facing. Residues 234 to 259 (VSTACATAVLGNQLGAAIGFLLPPVL) traverse the membrane as a helical segment. Over 260–265 (VPNTQN) the chain is Extracellular. An N-linked (GlcNAc...) asparagine glycan is attached at Asn-265. A helical transmembrane segment spans residues 266 to 295 (NTDLLACNISTMFYGTSSVATFLCFLTIIA). Topologically, residues 296–331 (FKEKPQYPPSQAQAALQNSPPAKYSYKKSIRNLFRN) are cytoplasmic. Residues 332–362 (VPFVLLLITYGIITGAFYSVSTLLNQMILTY) traverse the membrane as a helical segment. The Extracellular portion of the chain corresponds to 363–366 (YKGE). A helical membrane pass occupies residues 367–395 (EVSAGKIGLTLVVAGMVGSILCGFWLDYT). Residues 396 to 397 (KI) are Cytoplasmic-facing. A helical transmembrane segment spans residues 398-420 (YKQTTLIVYILSFLGMVIFTFTL). At 421-423 (DLG) the chain is on the extracellular side. A helical membrane pass occupies residues 424 to 453 (YGIVVFVTGGVLGFFMTGYLPLGFEFAVEI). Over 454–461 (TYPESEGT) the chain is Cytoplasmic. The chain crosses the membrane as a helical span at residues 462-487 (SSGLLNAAAQIFGILFTLAQGKLTTD). Residue Gln-471 coordinates ethanolamine. Residue Gln-471 coordinates choline. The Extracellular segment spans residues 488–489 (YS). A helical transmembrane segment spans residues 490-512 (PKAGNIFLCVWLFLGIILTALIK). The Cytoplasmic segment spans residues 513–560 (SDLRRHNINIGIANGDIKAVPVEDTVEDSPTDKESKTIVMSKQSESAI). The interval 537–560 (TVEDSPTDKESKTIVMSKQSESAI) is disordered. Ser-541 is subject to Phosphoserine. Positions 550–560 (IVMSKQSESAI) are enriched in polar residues.

Belongs to the major facilitator superfamily. Feline leukemia virus subgroup C receptor (TC 2.A.1.28.1) family.

It localises to the cell membrane. It catalyses the reaction choline(out) = choline(in). The enzyme catalyses ethanolamine(in) = ethanolamine(out). The catalysed reaction is heme b(in) = heme b(out). Uniporter that mediates the transport of extracellular choline and ethanolamine into cells, thereby playing a key role in phospholipid biosynthesis. Choline and ethanolamine are the precursors of phosphatidylcholine and phosphatidylethanolamine, respectively, the two most abundant phospholipids. Transport is not coupled with proton transport and is exclusively driven by the choline (or ethanolamine) gradient across the plasma membrane. Also acts as a heme b transporter that mediates heme efflux from the cytoplasm to the extracellular compartment. In terms of biological role, (Microbial infection) Confers susceptibility to Feline leukemia virus subgroup C (FeLV-C) infection, which is associated with fatal erythroid aplasia, also known as aplastic anemia. The protein is Choline/ethanolamine transporter FLVCR1 (FLVCR1) of Felis catus (Cat).